The sequence spans 434 residues: Glutamate-1-semialdehyde 2,1-aminomutase (434 aa).

An N6-(pyridoxal phosphate)lysine modification is found at lysine 270.

Belongs to the class-III pyridoxal-phosphate-dependent aminotransferase family. HemL subfamily. As to quaternary structure, homodimer. The cofactor is pyridoxal 5'-phosphate.

It is found in the cytoplasm. It catalyses the reaction (S)-4-amino-5-oxopentanoate = 5-aminolevulinate. Its pathway is porphyrin-containing compound metabolism; protoporphyrin-IX biosynthesis; 5-aminolevulinate from L-glutamyl-tRNA(Glu): step 2/2. The polypeptide is Glutamate-1-semialdehyde 2,1-aminomutase (Pelotomaculum thermopropionicum (strain DSM 13744 / JCM 10971 / SI)).